The primary structure comprises 283 residues: Diaminopimelate epimerase (283 aa).

Residues Asn14, Gln47, and Asn67 each contribute to the substrate site. Residue Cys76 is the Proton donor of the active site. Substrate is bound by residues 77–78 (GN), Asn164, Asn197, and 215–216 (ER). Cys224 serves as the catalytic Proton acceptor. 225–226 (GT) lines the substrate pocket.

Belongs to the diaminopimelate epimerase family. Homodimer.

It localises to the cytoplasm. It carries out the reaction (2S,6S)-2,6-diaminopimelate = meso-2,6-diaminopimelate. The protein operates within amino-acid biosynthesis; L-lysine biosynthesis via DAP pathway; DL-2,6-diaminopimelate from LL-2,6-diaminopimelate: step 1/1. Its function is as follows. Catalyzes the stereoinversion of LL-2,6-diaminopimelate (L,L-DAP) to meso-diaminopimelate (meso-DAP), a precursor of L-lysine and an essential component of the bacterial peptidoglycan. This Neisseria meningitidis serogroup A / serotype 4A (strain DSM 15465 / Z2491) protein is Diaminopimelate epimerase.